The following is a 384-amino-acid chain: MSQDLSLQKFGFIKRDTPRTVNLDPLQTGGLLTPEAREALLEWGDGYSVCDYCGGMLDQIKTPPIFDFVHKSLPSFIGMDHARVTNGARESKFAIMHAMTSPGDWIVMDGNAHYSSIVAAQRARLNVKLVPKTPAPDYKITPEAYAAAIEEVKQQSGKPPALALLTYPDGSYGNLADAKAITNLAHDFGVPIIINGAYAIGRMPFKGKDLGADFVAGSGHKSMAASGPVGVLGVNEQYAAKVLQKSPTHKNKEIEFLGCTARGATIMTMIASFPAVVERTKPESWEKEVSNARWFSEQMESIGMKQLGDKPHNHDLMFFEGTVFYDISQKTDRYFLYRELKEKSIHGIKPGLTKNFKLSTLGVGREKLGFVMDTLKDIIKKYDG.

Pyridoxal 5'-phosphate contacts are provided by residues 88 to 89, Asn-195, and 218 to 220; these read AR and SGH. Position 221 is an N6-(pyridoxal phosphate)lysine (Lys-221).

This sequence belongs to the SepCysS family. Homodimer. Interacts with SepRS. The cofactor is pyridoxal 5'-phosphate.

The catalysed reaction is O-phospho-L-seryl-tRNA(Cys) + hydrogen sulfide + H(+) = L-cysteinyl-tRNA(Cys) + phosphate. Its function is as follows. Converts O-phospho-L-seryl-tRNA(Cys) (Sep-tRNA(Cys)) to L-cysteinyl-tRNA(Cys) (Cys-tRNA(Cys)). This is O-phospho-L-seryl-tRNA:Cys-tRNA synthase 1 from Methanocella arvoryzae (strain DSM 22066 / NBRC 105507 / MRE50).